The chain runs to 764 residues: Protein FAR1-RELATED SEQUENCE 7 (764 aa).

Residues 42-118 enclose the FAR1 1 domain; that stretch reads DYYNSYATRT…QKEHNHDLGG (77 aa). The segment at 119–144 is disordered; that stretch reads HIEEAQTTPRPSVQQRAPAPTKLGIS. A compositionally biased stretch (polar residues) spans 123 to 133; that stretch reads AQTTPRPSVQQ. Residues 204 to 280 enclose the FAR1 2 domain; it reads QFYQAYAEVV…NKDHNHDLEP (77 aa). An MULE domain is found at 375 to 471; that stretch reads AVVFDTSYRK…SAWQIRSKER (97 aa). Residues 650–686 form an SWIM-type zinc finger; the sequence is HAVTFSASNLNASCSCQMFEYEGLLCRHILKVFNLLD.

This sequence belongs to the FHY3/FAR1 family. As to expression, expressed in hypocotyls, rosette and cauline leaves, inflorescences stems, flowers and siliques.

It localises to the nucleus. Functionally, putative transcription activator involved in regulating light control of development. This Arabidopsis thaliana (Mouse-ear cress) protein is Protein FAR1-RELATED SEQUENCE 7 (FRS7).